Here is a 152-residue protein sequence, read N- to C-terminus: Transcriptional regulator MraZ (152 aa).

2 consecutive SpoVT-AbrB domains span residues 5–52 and 81–124; these read ASAI…PLDE and AHEC…DETA.

It belongs to the MraZ family. In terms of assembly, forms oligomers.

It is found in the cytoplasm. The protein localises to the nucleoid. The chain is Transcriptional regulator MraZ from Shewanella woodyi (strain ATCC 51908 / MS32).